The primary structure comprises 391 residues: Protein kinase ORF14 (391 aa).

One can recognise a Protein kinase domain in the interval 109–391; sequence VPLRHTRGNI…ETLVDEFSKI (283 aa). Lys134 contacts ATP. Asp235 serves as the catalytic Proton acceptor.

Belongs to the protein kinase superfamily. Ser/Thr protein kinase family.

It carries out the reaction L-seryl-[protein] + ATP = O-phospho-L-seryl-[protein] + ADP + H(+). It catalyses the reaction L-threonyl-[protein] + ATP = O-phospho-L-threonyl-[protein] + ADP + H(+). The polypeptide is Protein kinase ORF14 (ORF14) (Ictalurid herpesvirus 1 (strain Auburn) (IcHV-1)).